Here is a 92-residue protein sequence, read N- to C-terminus: Acylphosphatase (92 aa).

The cysteines at positions 5 and 49 are disulfide-linked. Residues 5–92 (CIIAWVYGRV…SGELTDFRIR (88 aa)) form the Acylphosphatase-like domain. Catalysis depends on residues Arg20 and Asn38.

Belongs to the acylphosphatase family.

The enzyme catalyses an acyl phosphate + H2O = a carboxylate + phosphate + H(+). This chain is Acylphosphatase, found in Escherichia coli O6:H1 (strain CFT073 / ATCC 700928 / UPEC).